Here is a 487-residue protein sequence, read N- to C-terminus: Kynureninase 1 (487 aa).

Pyridoxal 5'-phosphate-binding positions include leucine 147, threonine 148, 175–178, serine 232, aspartate 261, histidine 264, and tyrosine 286; that span reads FPSD. Residue lysine 287 is modified to N6-(pyridoxal phosphate)lysine. Positions 327 and 355 each coordinate pyridoxal 5'-phosphate.

It belongs to the kynureninase family. Homodimer. Pyridoxal 5'-phosphate serves as cofactor.

The protein localises to the cytoplasm. It carries out the reaction L-kynurenine + H2O = anthranilate + L-alanine + H(+). The enzyme catalyses 3-hydroxy-L-kynurenine + H2O = 3-hydroxyanthranilate + L-alanine + H(+). The protein operates within amino-acid degradation; L-kynurenine degradation; L-alanine and anthranilate from L-kynurenine: step 1/1. Its pathway is cofactor biosynthesis; NAD(+) biosynthesis; quinolinate from L-kynurenine: step 2/3. Functionally, catalyzes the cleavage of L-kynurenine (L-Kyn) and L-3-hydroxykynurenine (L-3OHKyn) into anthranilic acid (AA) and 3-hydroxyanthranilic acid (3-OHAA), respectively. The protein is Kynureninase 1 (bna5-1) of Aspergillus oryzae (strain ATCC 42149 / RIB 40) (Yellow koji mold).